The chain runs to 579 residues: Tetratricopeptide repeat protein 39C (579 aa).

The segment covering 182 to 197 (QQGALASDQANHNTST) has biased composition (polar residues). The tract at residues 182–202 (QQGALASDQANHNTSTGSGGR) is disordered. TPR repeat units follow at residues 311–344 (SLFI…ASDQ), 349–382 (HVCL…SRWS), and 481–514 (GLKH…EYGR).

The protein belongs to the TTC39 family.

In Danio rerio (Zebrafish), this protein is Tetratricopeptide repeat protein 39C (ttc39c).